The primary structure comprises 105 residues: Toxin ParE2 (105 aa).

This sequence belongs to the RelE toxin family.

Its function is as follows. Toxic component of a type II toxin-antitoxin (TA) system. Its toxic effect is neutralized by coexpression with cognate antitoxin ParD2. The chain is Toxin ParE2 (parE2) from Mycobacterium tuberculosis (strain CDC 1551 / Oshkosh).